The sequence spans 456 residues: MFS-type transporter SLC18B1 (456 aa).

Met-1 is subject to N-acetylmethionine. Residues 1–24 (MEALGDLEGPRAPGGDDPAGSAGE) are disordered. Over 1–33 (MEALGDLEGPRAPGGDDPAGSAGETPGWLSREQ) the chain is Cytoplasmic. The segment covering 10-23 (PRAPGGDDPAGSAG) has biased composition (low complexity). Ser-21 carries the post-translational modification Phosphoserine. Residues 34–54 (VFVLISAASVNLGSMMCYSIL) traverse the membrane as a helical segment. The Extracellular segment spans residues 55-70 (GPFFPKEAEKKGASNT). Residues 71–91 (IIGMIFGCFALFELLASLVFG) traverse the membrane as a helical segment. The Cytoplasmic segment spans residues 92–100 (NYLVHIGAK). The chain crosses the membrane as a helical span at residues 101-121 (FMFVAGMFVSGGVTILFGVLD). At 122 to 127 (RVPDGP) the chain is on the extracellular side. Residues 128–148 (VFIAMCFLVRVMDAVSFAAAM) form a helical membrane-spanning segment. At 149–161 (TASSSILAKAFPN) the chain is on the cytoplasmic side. The helical transmembrane segment at 162–184 (NVATVLGSLETFSGLGLILGPPV) threads the bilayer. The Extracellular segment spans residues 185-195 (GGFLYQSFGYE). The chain crosses the membrane as a helical span at residues 196–216 (VPFIVLGCVVLLMVPLNMYIL). The Cytoplasmic segment spans residues 217 to 230 (PNYESDPGEHSFWK). A helical membrane pass occupies residues 231–251 (LIALPKVGLIAFVINSLSSCF). Residues 252 to 272 (GFLDPTLSLFVLEKFNLPAGY) lie on the Extracellular side of the membrane. The chain crosses the membrane as a helical span at residues 273 to 293 (VGLVFLGMALSYAISSPLFGL). The Cytoplasmic segment spans residues 294–304 (LSDKRPPLRKW). The helical transmembrane segment at 305–325 (LLVFGNLITAGCYMLLGPVPI) threads the bilayer. The Extracellular portion of the chain corresponds to 326–331 (LHIKSQ). Residues 332–352 (LWLLVLILVVSGLSAGMSIIP) form a helical membrane-spanning segment. At 353 to 377 (TFPEILSCAHENGFEEGLSTLGLVS) the chain is on the cytoplasmic side. The helical transmembrane segment at 378 to 398 (GLFSAMWSIGAFMGPTLGGFL) threads the bilayer. Residues 399–407 (YEKIGFEWA) lie on the Extracellular side of the membrane. The chain crosses the membrane as a helical span at residues 408-428 (AAIQGLWALISGLAMGLFYLL). Topologically, residues 429–456 (EYSRRKRSKSQNILSTEEERTTLLPNET) are cytoplasmic. Ser-438 carries the post-translational modification Phosphoserine.

Belongs to the major facilitator superfamily. As to expression, expressed in various tissues including lung, placenta, adrenal gland, liver, testis, and brain.

The protein resides in the cytoplasmic vesicle. Its subcellular location is the secretory vesicle membrane. The protein localises to the secretory vesicle. It localises to the synaptic vesicle membrane. The enzyme catalyses spermine(in) + n H(+)(out) = spermine(out) + n H(+)(in). The catalysed reaction is spermidine(in) + n H(+)(out) = spermidine(out) + n H(+)(in). It carries out the reaction serotonin(in) + n H(+)(out) = serotonin(out) + n H(+)(in). Its function is as follows. Proton-coupled polyamine antiporter involved in the translocation of polyamines from cytosol into secretory vesicles prior to their release via exocytosis. Uses the electrochemical proton gradient generated by a V-type proton-pumping ATPase to couple the efflux of protons with the uptake of a polyamine molecule. Facilitates vesicular storage of spermine and spermidine in astrocytes with an impact on glutamatergic neuronal transmission and memory formation. Upon antigen stimulation, regulates polyamine accumulation and release in mast cell secretory granules, which in turn potentiates mast cell degranulation and histamine secretion. In Homo sapiens (Human), this protein is MFS-type transporter SLC18B1.